The primary structure comprises 443 residues: Porin D (443 aa).

A signal peptide spans 1-23; it reads MKVMKWSAIALAVSAGSTQFAVA. Catalysis depends on residues H179, D231, and S319.

This sequence belongs to the outer membrane porin (Opr) (TC 1.B.25) family.

The protein localises to the cell outer membrane. In terms of biological role, porin with a specificity for basic amino acids. Involved in facilitated diffusion of carbapenem beta-lactam antibiotics, such as imipenem and meropenem. Also possesses serine protease activity. The chain is Porin D (oprD) from Pseudomonas aeruginosa (strain ATCC 15692 / DSM 22644 / CIP 104116 / JCM 14847 / LMG 12228 / 1C / PRS 101 / PAO1).